A 596-amino-acid chain; its full sequence is Aspartate--tRNA(Asp/Asn) ligase (596 aa).

Glutamate 175 contributes to the L-aspartate binding site. The tract at residues 199-202 (QQYK) is aspartate. The L-aspartate site is built by arginine 221 and histidine 454. 221–223 (RDE) contributes to the ATP binding site. Glutamate 488 contacts ATP. Residue arginine 495 participates in L-aspartate binding. 540-543 (GIDR) contacts ATP.

Belongs to the class-II aminoacyl-tRNA synthetase family. Type 1 subfamily. Homodimer.

The protein resides in the cytoplasm. It catalyses the reaction tRNA(Asx) + L-aspartate + ATP = L-aspartyl-tRNA(Asx) + AMP + diphosphate. Its function is as follows. Aspartyl-tRNA synthetase with relaxed tRNA specificity since it is able to aspartylate not only its cognate tRNA(Asp) but also tRNA(Asn). Reaction proceeds in two steps: L-aspartate is first activated by ATP to form Asp-AMP and then transferred to the acceptor end of tRNA(Asp/Asn). The protein is Aspartate--tRNA(Asp/Asn) ligase of Rhizobium rhizogenes (strain K84 / ATCC BAA-868) (Agrobacterium radiobacter).